Reading from the N-terminus, the 237-residue chain is MARSMTSLVAVVPAAGVGSRMKADRPKQYLQIHGKTILEHTIERLLSHPAITQVVVAVSEDDPYYSDLAIAQHPDIIRVAGGKERADSVLSALCFLSQQPQKTDWVLVHDAARPCVAHQDIDALIERCSSHETGGILATPVRDTMKRANAQQMIDHTVDRNALWHALTPQMFKAEVLTDALSDALAQGVAITDEASALEWRGALPALVQGCSSNIKVTQPEDLALAEFYLSREKDRK.

This sequence belongs to the IspD/TarI cytidylyltransferase family. IspD subfamily.

The enzyme catalyses 2-C-methyl-D-erythritol 4-phosphate + CTP + H(+) = 4-CDP-2-C-methyl-D-erythritol + diphosphate. The protein operates within isoprenoid biosynthesis; isopentenyl diphosphate biosynthesis via DXP pathway; isopentenyl diphosphate from 1-deoxy-D-xylulose 5-phosphate: step 2/6. Functionally, catalyzes the formation of 4-diphosphocytidyl-2-C-methyl-D-erythritol from CTP and 2-C-methyl-D-erythritol 4-phosphate (MEP). The polypeptide is 2-C-methyl-D-erythritol 4-phosphate cytidylyltransferase (Vibrio vulnificus (strain YJ016)).